The primary structure comprises 166 residues: uncharacterized protein (166 aa).

117–124 (AAKSGGKT) is a binding site for ATP.

This is an uncharacterized protein from Mycoplasma pneumoniae (strain ATCC 29342 / M129 / Subtype 1) (Mycoplasmoides pneumoniae).